Here is a 206-residue protein sequence, read N- to C-terminus: Large ribosomal subunit protein uL4 (206 aa).

Positions 43–78 (ARSGNRKQKDREEVKHTTKKPWRQKGTGRARAGMSS) are disordered. Residues 49 to 58 (KQKDREEVKH) are compositionally biased toward basic and acidic residues. Positions 59-70 (TTKKPWRQKGTG) are enriched in basic residues.

The protein belongs to the universal ribosomal protein uL4 family. As to quaternary structure, part of the 50S ribosomal subunit.

One of the primary rRNA binding proteins, this protein initially binds near the 5'-end of the 23S rRNA. It is important during the early stages of 50S assembly. It makes multiple contacts with different domains of the 23S rRNA in the assembled 50S subunit and ribosome. In terms of biological role, forms part of the polypeptide exit tunnel. The protein is Large ribosomal subunit protein uL4 of Cupriavidus pinatubonensis (strain JMP 134 / LMG 1197) (Cupriavidus necator (strain JMP 134)).